The primary structure comprises 275 residues: Large ribosomal subunit protein uL2 (275 aa).

Residues 223-275 are disordered; it reads VAMNPVDHPHGGGEGRTSGGRHPVSPWGQPTKGYKTRSNKRTDKYIVRRRNKK.

Belongs to the universal ribosomal protein uL2 family. As to quaternary structure, part of the 50S ribosomal subunit. Forms a bridge to the 30S subunit in the 70S ribosome.

In terms of biological role, one of the primary rRNA binding proteins. Required for association of the 30S and 50S subunits to form the 70S ribosome, for tRNA binding and peptide bond formation. It has been suggested to have peptidyltransferase activity; this is somewhat controversial. Makes several contacts with the 16S rRNA in the 70S ribosome. This chain is Large ribosomal subunit protein uL2, found in Shewanella halifaxensis (strain HAW-EB4).